A 113-amino-acid polypeptide reads, in one-letter code: Large ribosomal subunit protein uL24 (113 aa).

The disordered stretch occupies residues 48–70; sequence HRKRVTNDKGTSSGGLEKRESPM.

This sequence belongs to the universal ribosomal protein uL24 family. Part of the 50S ribosomal subunit.

Its function is as follows. One of two assembly initiator proteins, it binds directly to the 5'-end of the 23S rRNA, where it nucleates assembly of the 50S subunit. In terms of biological role, one of the proteins that surrounds the polypeptide exit tunnel on the outside of the subunit. This Tropheryma whipplei (strain TW08/27) (Whipple's bacillus) protein is Large ribosomal subunit protein uL24.